Reading from the N-terminus, the 687-residue chain is Polyphosphate kinase (687 aa).

Asn-45 contributes to the ATP binding site. Residues Arg-375 and Arg-405 each coordinate Mg(2+). The active-site Phosphohistidine intermediate is His-435. ATP-binding residues include Tyr-472, Arg-568, and His-596.

It belongs to the polyphosphate kinase 1 (PPK1) family. Requires Mg(2+) as cofactor. Post-translationally, an intermediate of this reaction is the autophosphorylated ppk in which a phosphate is covalently linked to a histidine residue through a N-P bond.

The enzyme catalyses [phosphate](n) + ATP = [phosphate](n+1) + ADP. Its function is as follows. Catalyzes the reversible transfer of the terminal phosphate of ATP to form a long-chain polyphosphate (polyP). The protein is Polyphosphate kinase of Burkholderia multivorans (strain ATCC 17616 / 249).